The chain runs to 101 residues: Small ribosomal subunit protein uS14 (101 aa).

It belongs to the universal ribosomal protein uS14 family. In terms of assembly, part of the 30S ribosomal subunit. Contacts proteins S3 and S10.

Binds 16S rRNA, required for the assembly of 30S particles and may also be responsible for determining the conformation of the 16S rRNA at the A site. In Delftia acidovorans (strain DSM 14801 / SPH-1), this protein is Small ribosomal subunit protein uS14.